The sequence spans 160 residues: SsrA-binding protein (160 aa).

This sequence belongs to the SmpB family.

The protein resides in the cytoplasm. Required for rescue of stalled ribosomes mediated by trans-translation. Binds to transfer-messenger RNA (tmRNA), required for stable association of tmRNA with ribosomes. tmRNA and SmpB together mimic tRNA shape, replacing the anticodon stem-loop with SmpB. tmRNA is encoded by the ssrA gene; the 2 termini fold to resemble tRNA(Ala) and it encodes a 'tag peptide', a short internal open reading frame. During trans-translation Ala-aminoacylated tmRNA acts like a tRNA, entering the A-site of stalled ribosomes, displacing the stalled mRNA. The ribosome then switches to translate the ORF on the tmRNA; the nascent peptide is terminated with the 'tag peptide' encoded by the tmRNA and targeted for degradation. The ribosome is freed to recommence translation, which seems to be the essential function of trans-translation. The sequence is that of SsrA-binding protein from Salmonella arizonae (strain ATCC BAA-731 / CDC346-86 / RSK2980).